The chain runs to 841 residues: Probable alpha-glucuronidase A (841 aa).

An N-terminal signal peptide occupies residues 1–19 (MLRLPLVLVWSLWASLTVA). 12 N-linked (GlcNAc...) asparagine glycosylation sites follow: Asn50, Asn104, Asn223, Asn280, Asn311, Asn344, Asn466, Asn528, Asn577, Asn683, Asn724, and Asn733.

The protein belongs to the glycosyl hydrolase 67 family.

It localises to the secreted. The catalysed reaction is an alpha-D-glucuronoside + H2O = D-glucuronate + an alcohol. Its function is as follows. Alpha-glucuronidase involved in the hydrolysis of xylan, a major structural heterogeneous polysaccharide found in plant biomass representing the second most abundant polysaccharide in the biosphere, after cellulose. Releases 4-O-methylglucuronic acid from xylan. In Aspergillus terreus (strain NIH 2624 / FGSC A1156), this protein is Probable alpha-glucuronidase A (aguA).